Here is a 435-residue protein sequence, read N- to C-terminus: MADSAHVPETLAGGFFSVGLAERDPELAAAINQEATRQQHQIELIASENIVSRAVLEAQGSILTNKYAEGYPGKRYYGGCEFVDIAEELAIERAKKLFNCGFANVQPNSGSQANQGVFQAVLKPGDTILGMSLAAGGHLTHGAKPNQSGKWFNAVQYGVRPEDHLIDFDEVERLARAHRPQMIIAGGSAYPRQIDFKRFREIADDVGAIFLVDMAHFAGLVAGGAHPNPLDHCHIATTTTHKTLRGPRGGMILTNDEALAKKINSAIFPGIQGGPLMHVIAGKAVAFGEALMPEFKTYVEQVVSNARAMAAACRTAGLDVVSDGTDTHLALIDLRPKGVTGRDAEAALERAYITCNKNGIPFDPAPPTVTSGIRVGSPAGTTRGFREEEFIQIGTWIGEIVDALANGNSDAVEARVREEVKALTARFPIYEGLGG.

(6S)-5,6,7,8-tetrahydrofolate contacts are provided by residues Leu133 and 137 to 139 (GHL). Lys242 is subject to N6-(pyridoxal phosphate)lysine.

This sequence belongs to the SHMT family. As to quaternary structure, homodimer. Pyridoxal 5'-phosphate is required as a cofactor.

The protein localises to the cytoplasm. The enzyme catalyses (6R)-5,10-methylene-5,6,7,8-tetrahydrofolate + glycine + H2O = (6S)-5,6,7,8-tetrahydrofolate + L-serine. It functions in the pathway one-carbon metabolism; tetrahydrofolate interconversion. Its pathway is amino-acid biosynthesis; glycine biosynthesis; glycine from L-serine: step 1/1. In terms of biological role, catalyzes the reversible interconversion of serine and glycine with tetrahydrofolate (THF) serving as the one-carbon carrier. This reaction serves as the major source of one-carbon groups required for the biosynthesis of purines, thymidylate, methionine, and other important biomolecules. Also exhibits THF-independent aldolase activity toward beta-hydroxyamino acids, producing glycine and aldehydes, via a retro-aldol mechanism. The polypeptide is Serine hydroxymethyltransferase (Hyphomonas neptunium (strain ATCC 15444)).